Here is a 763-residue protein sequence, read N- to C-terminus: Glycerophosphodiester phosphodiesterase GDPDL1 (763 aa).

Positions 1–35 are cleaved as a signal peptide; the sequence is MNSRPSNPTKLVIRSSTLLFCGVVLIHLFAAQIDA. At 36-744 the chain is on the extracellular side; it reads QRSTSRWQTL…STIAQAPSGQ (709 aa). Residues 50–350 enclose the GP-PDE 1 domain; it reads PLVIARGGFS…DFPITASAAV (301 aa). 10 N-linked (GlcNAc...) asparagine glycosylation sites follow: Asn105, Asn192, Asn248, Asn257, Asn315, Asn359, Asn430, Asn534, Asn547, and Asn654. One can recognise a GP-PDE 2 domain in the interval 366-668; it reads FLVISKDGAS…EFPFTAARYK (303 aa). Residues 745–762 traverse the membrane as a helical segment; sequence TRLKLSLLLSVFFLSLLL. Leu763 is a topological domain (cytoplasmic).

The protein belongs to the glycerophosphoryl diester phosphodiesterase family. It depends on Ca(2+) as a cofactor. Expressed in rosette and cauline leaves, stems, flowers and siliques.

The protein resides in the cell membrane. It catalyses the reaction a sn-glycero-3-phosphodiester + H2O = an alcohol + sn-glycerol 3-phosphate + H(+). Functionally, hydrolyzes glycerolphosphoglycerol, glycerophosphocholine and glycerophosphoethanolamine in vitro. This chain is Glycerophosphodiester phosphodiesterase GDPDL1, found in Arabidopsis thaliana (Mouse-ear cress).